Here is a 764-residue protein sequence, read N- to C-terminus: Sesterfisherol synthase (764 aa).

The terpene cyclase stretch occupies residues 2 to 331 (EVWEHSRPIA…SPRHHAWRNN (330 aa)). Aspartate 95 contributes to the Mg(2+) binding site. Substrate contacts are provided by residues aspartate 95, 187 to 190 (RRDD), asparagine 231, 235 to 239 (SFDRE), and 324 to 325 (RH). A DDXXD 1 motif is present at residues 95–99 (DDGYE). Positions 231–239 (NDYWSFDRE) match the NSE/DTE motif. The prenyltransferase stretch occupies residues 332 to 759 (SRNGLKPANH…PMLRLLLEKL (428 aa)). Residues 347–372 (LITPSNNLNSSKGSEEQMQDSDNGTR) form a disordered region. Residues 348–358 (ITPSNNLNSSK) are compositionally biased toward polar residues. 3 residues coordinate isopentenyl diphosphate: lysine 476, arginine 479, and histidine 508. Mg(2+) is bound by residues aspartate 515 and aspartate 519. The short motif at 515–519 (DDIED) is the DDXXD 2 element. Residue arginine 524 participates in dimethylallyl diphosphate binding. Arginine 525 is an isopentenyl diphosphate binding site. Lysine 602, threonine 603, glutamine 638, asparagine 645, lysine 655, and lysine 665 together coordinate dimethylallyl diphosphate.

The protein in the N-terminal section; belongs to the terpene synthase family. In the C-terminal section; belongs to the FPP/GGPP synthase family. In terms of assembly, hexamer. Mg(2+) is required as a cofactor.

The catalysed reaction is isopentenyl diphosphate + (2E,6E)-farnesyl diphosphate = (2E,6E,10E)-geranylgeranyl diphosphate + diphosphate. It carries out the reaction isopentenyl diphosphate + (2E,6E,10E)-geranylgeranyl diphosphate = (2E,6E,10E,14E)-geranylfarnesyl diphosphate + diphosphate. It catalyses the reaction (2E,6E,10E,14E)-geranylfarnesyl diphosphate + H2O = sesterfisherol + diphosphate. It participates in secondary metabolite biosynthesis; terpenoid biosynthesis. In terms of biological role, bifunctional terpene synthase; part of the gene cluster that mediates the biosynthesis of sesterfisheric acid. The bifunctional terpene synthase NfSS converts dimethylallyl diphosphate (DMAPP) and isopentenyl diphosphate (IPP) into sesterfisherol. The C-terminal prenyltransferase (PT) domain of NfSS catalyzes formation of geranylfarnesyl pyrophosphate (GFPP), whereas the N-terminal terpene cyclase (TC) domain catalyzes the cyclization of GFPP to sesterfisherol. The cytochrome P450 monooxygenase NfP450 then catalyzes oxidative modifications of sesterfisherol into sesterfisheric acid. This Neosartorya fischeri (strain ATCC 1020 / DSM 3700 / CBS 544.65 / FGSC A1164 / JCM 1740 / NRRL 181 / WB 181) (Aspergillus fischerianus) protein is Sesterfisherol synthase.